Consider the following 164-residue polypeptide: Lipoprotein signal peptidase (164 aa).

Helical transmembrane passes span 12 to 32 (FLWL…WIVA), 70 to 90 (WLFT…LKET), and 93 to 113 (QQVM…GNVF). Catalysis depends on residues Asp-123 and Asp-141. The chain crosses the membrane as a helical span at residues 133 to 153 (YWPAFNVADSAICLGAFLLVI).

It belongs to the peptidase A8 family.

Its subcellular location is the cell inner membrane. The catalysed reaction is Release of signal peptides from bacterial membrane prolipoproteins. Hydrolyzes -Xaa-Yaa-Zaa-|-(S,diacylglyceryl)Cys-, in which Xaa is hydrophobic (preferably Leu), and Yaa (Ala or Ser) and Zaa (Gly or Ala) have small, neutral side chains.. The protein operates within protein modification; lipoprotein biosynthesis (signal peptide cleavage). In terms of biological role, this protein specifically catalyzes the removal of signal peptides from prolipoproteins. The protein is Lipoprotein signal peptidase of Pseudoalteromonas atlantica (strain T6c / ATCC BAA-1087).